The chain runs to 235 residues: 7-cyano-7-deazaguanine synthase (235 aa).

Residue 10-20 participates in ATP binding; sequence FSGGQDSTTCL. Positions 198, 213, 216, and 219 each coordinate Zn(2+).

This sequence belongs to the QueC family. Requires Zn(2+) as cofactor.

It carries out the reaction 7-carboxy-7-deazaguanine + NH4(+) + ATP = 7-cyano-7-deazaguanine + ADP + phosphate + H2O + H(+). It functions in the pathway purine metabolism; 7-cyano-7-deazaguanine biosynthesis. Functionally, catalyzes the ATP-dependent conversion of 7-carboxy-7-deazaguanine (CDG) to 7-cyano-7-deazaguanine (preQ(0)). The polypeptide is 7-cyano-7-deazaguanine synthase (Paracidovorax citrulli (strain AAC00-1) (Acidovorax citrulli)).